Here is a 183-residue protein sequence, read N- to C-terminus: Capsid protein (183 aa).

The interval 143–183 (LPETAVVRRRGRSPRRRTPSPRRRRSQSPRRRRSQSPASQC) is disordered. The segment covering 149–176 (VRRRGRSPRRRTPSPRRRRSQSPRRRRS) has biased composition (basic residues). Residues Ser-155, Ser-162, and Ser-170 each carry the phosphoserine; by host modification. One copy of the 1; half-length repeat lies at 155-161 (SPRRRTP). The tract at residues 155–177 (SPRRRTPSPRRRRSQSPRRRRSQ) is 3 X 8 AA repeats of S-P-R-R-R-[PR]-S-Q. A Bipartite nuclear localization signal motif is present at residues 158–175 (RRTPSPRRRRSQSPRRRR). 2 repeat units span residues 162–169 (SPRRRRSQ) and 170–177 (SPRRRRSQ). The RNA binding stretch occupies residues 177-183 (QSPASQC).

This sequence belongs to the orthohepadnavirus core antigen family. Homodimerizes, then multimerizes. Interacts with cytosol exposed regions of viral L glycoprotein present in the reticulum-to-Golgi compartment. Interacts with human FLNB. Phosphorylated form interacts with host importin alpha; this interaction depends on the exposure of the NLS, which itself depends upon genome maturation and/or phosphorylation of the capsid protein. Interacts with host NUP153. In terms of processing, phosphorylated by host SRPK1, SRPK2, and maybe protein kinase C or GAPDH. Phosphorylation is critical for pregenomic RNA packaging. Protein kinase C phosphorylation is stimulated by HBx protein and may play a role in transport of the viral genome to the nucleus at the late step during the viral replication cycle.

It localises to the virion. The protein resides in the host cytoplasm. In terms of biological role, self assembles to form an icosahedral capsid. Most capsids appear to be large particles with an icosahedral symmetry of T=4 and consist of 240 copies of capsid protein, though a fraction forms smaller T=3 particles consisting of 180 capsid proteins. Entering capsids are transported along microtubules to the nucleus. Phosphorylation of the capsid is thought to induce exposure of nuclear localization signal in the C-terminal portion of the capsid protein that allows binding to the nuclear pore complex via the importin (karyopherin-) alpha and beta. Capsids are imported in intact form through the nuclear pore into the nuclear basket, where it probably binds NUP153. Only capsids that contain the mature viral genome can release the viral DNA and capsid protein into the nucleoplasm. Immature capsids get stuck in the basket. Capsids encapsulate the pre-genomic RNA and the P protein. Pre-genomic RNA is reverse-transcribed into DNA while the capsid is still in the cytoplasm. The capsid can then either be directed to the nucleus, providing more genomes for transcription, or bud through the endoplasmic reticulum to provide new virions. This Gorilla gorilla (western gorilla) protein is Capsid protein.